The sequence spans 121 residues: Small ribosomal subunit protein uS13 (121 aa).

The tract at residues Gly-94 to Lys-121 is disordered. A compositionally biased stretch (basic residues) spans Lys-110–Lys-121.

The protein belongs to the universal ribosomal protein uS13 family. Part of the 30S ribosomal subunit. Forms a loose heterodimer with protein S19. Forms two bridges to the 50S subunit in the 70S ribosome.

Its function is as follows. Located at the top of the head of the 30S subunit, it contacts several helices of the 16S rRNA. In the 70S ribosome it contacts the 23S rRNA (bridge B1a) and protein L5 of the 50S subunit (bridge B1b), connecting the 2 subunits; these bridges are implicated in subunit movement. Contacts the tRNAs in the A and P-sites. The protein is Small ribosomal subunit protein uS13 of Mesoplasma florum (strain ATCC 33453 / NBRC 100688 / NCTC 11704 / L1) (Acholeplasma florum).